We begin with the raw amino-acid sequence, 67 residues long: Large ribosomal subunit protein bL35 (67 aa).

The protein belongs to the bacterial ribosomal protein bL35 family.

This chain is Large ribosomal subunit protein bL35, found in Bartonella quintana (strain Toulouse) (Rochalimaea quintana).